The primary structure comprises 305 residues: uncharacterized protein (305 aa).

A compositionally biased stretch (basic residues) spans 1–10; that stretch reads MLWAQRKKRK. A disordered region spans residues 1-30; the sequence is MLWAQRKKRKATTETTEDKPAESHRPNDSW. The span at 16–27 shows a compositional bias: basic and acidic residues; it reads TEDKPAESHRPN. Phosphoserine is present on Ser39. The segment covering 92 to 101 has biased composition (polar residues); that stretch reads QKISGTSVSK. The segment at 92–114 is disordered; the sequence is QKISGTSVSKEMQRESGKSPSME. Ser158 is subject to Phosphoserine. Over residues 197–208 the composition is skewed to low complexity; it reads SHHGNQSHQNHN. The disordered stretch occupies residues 197 to 305; the sequence is SHHGNQSHQN…VNRRNQIYDS (109 aa). Polar residues-rich tracts occupy residues 209–221 and 231–244; these read TYPC…SRSV and LSHQ…SHQN. Residues 247 to 293 are compositionally biased toward low complexity; that stretch reads GHPSQQGHSSHSNQQGHLGLSSQQGHPSQSSHQSHQGQPGHPNHQSH. A compositionally biased stretch (polar residues) spans 294–305; it reads SLVNRRNQIYDS.

This is an uncharacterized protein from Rattus norvegicus (Rat).